The chain runs to 209 residues: Uracil phosphoribosyltransferase (209 aa).

Residues Arg-79, Arg-104, and 131 to 139 (DPMLATGGS) contribute to the 5-phospho-alpha-D-ribose 1-diphosphate site. Uracil contacts are provided by residues Ile-194 and 199-201 (GDA). A 5-phospho-alpha-D-ribose 1-diphosphate-binding site is contributed by Asp-200.

This sequence belongs to the UPRTase family. Mg(2+) serves as cofactor.

The catalysed reaction is UMP + diphosphate = 5-phospho-alpha-D-ribose 1-diphosphate + uracil. It participates in pyrimidine metabolism; UMP biosynthesis via salvage pathway; UMP from uracil: step 1/1. Its activity is regulated as follows. Allosterically activated by GTP. Its function is as follows. Catalyzes the conversion of uracil and 5-phospho-alpha-D-ribose 1-diphosphate (PRPP) to UMP and diphosphate. The protein is Uracil phosphoribosyltransferase of Agathobacter rectalis (strain ATCC 33656 / DSM 3377 / JCM 17463 / KCTC 5835 / VPI 0990) (Eubacterium rectale).